A 790-amino-acid polypeptide reads, in one-letter code: Polyribonucleotide nucleotidyltransferase (790 aa).

Residues D498 and D504 each coordinate Mg(2+). The KH domain maps to P565–I624. The S1 motif domain occupies G634–K702. Residues A710 to N790 form a disordered region. Over residues P739 to G755 the composition is skewed to basic and acidic residues. Residues S757–G772 show a composition bias toward pro residues.

The protein belongs to the polyribonucleotide nucleotidyltransferase family. It depends on Mg(2+) as a cofactor.

Its subcellular location is the cytoplasm. The enzyme catalyses RNA(n+1) + phosphate = RNA(n) + a ribonucleoside 5'-diphosphate. Functionally, involved in mRNA degradation. Catalyzes the phosphorolysis of single-stranded polyribonucleotides processively in the 3'- to 5'-direction. This is Polyribonucleotide nucleotidyltransferase from Thermomicrobium roseum (strain ATCC 27502 / DSM 5159 / P-2).